The primary structure comprises 120 residues: uncharacterized protein (120 aa).

This is an uncharacterized protein from Escherichia coli O6:H1 (strain CFT073 / ATCC 700928 / UPEC).